The sequence spans 411 residues: LL-diaminopimelate aminotransferase (411 aa).

Substrate is bound by residues tyrosine 15 and glycine 42. Pyridoxal 5'-phosphate contacts are provided by residues tyrosine 72, 108–109 (SK), tyrosine 132, asparagine 187, tyrosine 218, and 246–248 (SFS). Substrate contacts are provided by lysine 109, tyrosine 132, and asparagine 187. Position 249 is an N6-(pyridoxal phosphate)lysine (lysine 249). Pyridoxal 5'-phosphate is bound by residues arginine 257 and asparagine 292. Substrate-binding residues include asparagine 292 and arginine 388.

The protein belongs to the class-I pyridoxal-phosphate-dependent aminotransferase family. LL-diaminopimelate aminotransferase subfamily. In terms of assembly, homodimer. Requires pyridoxal 5'-phosphate as cofactor.

The enzyme catalyses (2S,6S)-2,6-diaminopimelate + 2-oxoglutarate = (S)-2,3,4,5-tetrahydrodipicolinate + L-glutamate + H2O + H(+). The protein operates within amino-acid biosynthesis; L-lysine biosynthesis via DAP pathway; LL-2,6-diaminopimelate from (S)-tetrahydrodipicolinate (aminotransferase route): step 1/1. Involved in the synthesis of meso-diaminopimelate (m-DAP or DL-DAP), required for both lysine and peptidoglycan biosynthesis. Catalyzes the direct conversion of tetrahydrodipicolinate to LL-diaminopimelate. In Cyanothece sp. (strain PCC 7425 / ATCC 29141), this protein is LL-diaminopimelate aminotransferase.